Here is a 320-residue protein sequence, read N- to C-terminus: Ferrochelatase (320 aa).

The Fe cation site is built by His-194 and Glu-275.

This sequence belongs to the ferrochelatase family. Monomer.

It is found in the cytoplasm. It carries out the reaction heme b + 2 H(+) = protoporphyrin IX + Fe(2+). It participates in porphyrin-containing compound metabolism; protoheme biosynthesis; protoheme from protoporphyrin-IX: step 1/1. Catalyzes the ferrous insertion into protoporphyrin IX. The chain is Ferrochelatase from Salmonella paratyphi A (strain ATCC 9150 / SARB42).